A 329-amino-acid chain; its full sequence is Glyceraldehyde-3-phosphate dehydrogenase 1 (329 aa).

Residues 11–12, Asp-33, and Glu-77 each bind NAD(+); that span reads RI. Ser-148 is subject to Phosphoserine. 148 to 150 provides a ligand contact to D-glyceraldehyde 3-phosphate; the sequence is SCT. The active-site Nucleophile is Cys-149. A Phosphoserine modification is found at Ser-177. D-glyceraldehyde 3-phosphate is bound at residue Thr-179. Ser-200 is modified (phosphoserine). Residues 208 to 209 and Arg-231 each bind D-glyceraldehyde 3-phosphate; that span reads TG. An NAD(+)-binding site is contributed by Asn-313.

It belongs to the glyceraldehyde-3-phosphate dehydrogenase family. In terms of assembly, homotetramer.

The protein localises to the cytoplasm. The catalysed reaction is D-glyceraldehyde 3-phosphate + phosphate + NAD(+) = (2R)-3-phospho-glyceroyl phosphate + NADH + H(+). The protein operates within carbohydrate degradation; glycolysis; pyruvate from D-glyceraldehyde 3-phosphate: step 1/5. This chain is Glyceraldehyde-3-phosphate dehydrogenase 1, found in Kluyveromyces marxianus (Yeast).